We begin with the raw amino-acid sequence, 376 residues long: MDFSRPSFSPWRWLTLVASLLTCGICQASGQIFISPDSLLGVEKYRTILTLENVPEDVLEYSWYRGKDNSTENMIFSYKPPNTRHPGPSYSGRENVTRAGSLVVRMSAVNDTGYYTVEVDTSNETQRATGWLQIVKLRSNPGISANTSALVEGMDSVVAKCLTNSSNISWYVNFVPTSGSNRMTISPDGKTLIIHRVSRYDHTLQCAIEDVPEILQKSELIQLTVAYGPDYVSLWTQPYFFAGVLTADIGSSVQLECNCFSKPEPRYHWIHNGSFLSIPENNMTLPSLSWEQMGSYRCVVENPETQLTFYRDVTIQPPRPPLPTVNRELYIPGPLVIFLILLTSLGGAFVCRVLVYSLFQSCSRGKTCHKCPWQTN.

An N-terminal signal peptide occupies residues 1-30; that stretch reads MDFSRPSFSPWRWLTLVASLLTCGICQASG. Residues 31–330 are Extracellular-facing; that stretch reads QIFISPDSLL…PLPTVNRELY (300 aa). N-linked (GlcNAc...) asparagine glycans are attached at residues asparagine 69, asparagine 95, and asparagine 110. The region spanning 229 to 314 is the Ig-like C2-type domain; that stretch reads PDYVSLWTQP…TQLTFYRDVT (86 aa). Cysteine 257 and cysteine 298 are oxidised to a cystine. The chain crosses the membrane as a helical span at residues 331–351; that stretch reads IPGPLVIFLILLTSLGGAFVC. Residues 352–376 lie on the Cytoplasmic side of the membrane; it reads RVLVYSLFQSCSRGKTCHKCPWQTN.

Belongs to the immunoglobulin superfamily. CEA family. In terms of tissue distribution, mostly expressed in the small and large intestine and at lower levels also in other organs.

Its subcellular location is the membrane. This Mus musculus (Mouse) protein is Cell adhesion molecule CEACAM18.